A 407-amino-acid polypeptide reads, in one-letter code: 1-deoxy-D-xylulose 5-phosphate reductoisomerase (407 aa).

Residues Thr27, Gly28, Ser29, Ile30, Ala53, Arg54, Asn55, and Asn140 each coordinate NADPH. Residue Lys141 coordinates 1-deoxy-D-xylulose 5-phosphate. Residue Glu142 coordinates NADPH. Residue Asp166 coordinates Mn(2+). Positions 167, 168, 192, and 215 each coordinate 1-deoxy-D-xylulose 5-phosphate. Residue Glu168 participates in Mn(2+) binding. Position 221 (Gly221) interacts with NADPH. Ser228, Asn233, Lys234, and Glu237 together coordinate 1-deoxy-D-xylulose 5-phosphate. Glu237 is a binding site for Mn(2+).

Belongs to the DXR family. Mg(2+) serves as cofactor. Mn(2+) is required as a cofactor.

It catalyses the reaction 2-C-methyl-D-erythritol 4-phosphate + NADP(+) = 1-deoxy-D-xylulose 5-phosphate + NADPH + H(+). The protein operates within isoprenoid biosynthesis; isopentenyl diphosphate biosynthesis via DXP pathway; isopentenyl diphosphate from 1-deoxy-D-xylulose 5-phosphate: step 1/6. Functionally, catalyzes the NADPH-dependent rearrangement and reduction of 1-deoxy-D-xylulose-5-phosphate (DXP) to 2-C-methyl-D-erythritol 4-phosphate (MEP). This Oleidesulfovibrio alaskensis (strain ATCC BAA-1058 / DSM 17464 / G20) (Desulfovibrio alaskensis) protein is 1-deoxy-D-xylulose 5-phosphate reductoisomerase.